A 343-amino-acid chain; its full sequence is S-adenosylmethionine:tRNA ribosyltransferase-isomerase (343 aa).

This sequence belongs to the QueA family. As to quaternary structure, monomer.

The protein resides in the cytoplasm. The catalysed reaction is 7-aminomethyl-7-carbaguanosine(34) in tRNA + S-adenosyl-L-methionine = epoxyqueuosine(34) in tRNA + adenine + L-methionine + 2 H(+). It functions in the pathway tRNA modification; tRNA-queuosine biosynthesis. Functionally, transfers and isomerizes the ribose moiety from AdoMet to the 7-aminomethyl group of 7-deazaguanine (preQ1-tRNA) to give epoxyqueuosine (oQ-tRNA). The protein is S-adenosylmethionine:tRNA ribosyltransferase-isomerase of Stenotrophomonas maltophilia (strain R551-3).